Here is a 314-residue protein sequence, read N- to C-terminus: Ribosomal protein L11 methyltransferase (314 aa).

The S-adenosyl-L-methionine site is built by Thr164, Gly185, Asp207, and Asn249.

It belongs to the methyltransferase superfamily. PrmA family.

The protein resides in the cytoplasm. The catalysed reaction is L-lysyl-[protein] + 3 S-adenosyl-L-methionine = N(6),N(6),N(6)-trimethyl-L-lysyl-[protein] + 3 S-adenosyl-L-homocysteine + 3 H(+). In terms of biological role, methylates ribosomal protein L11. This is Ribosomal protein L11 methyltransferase from Clostridium beijerinckii (strain ATCC 51743 / NCIMB 8052) (Clostridium acetobutylicum).